Here is a 179-residue protein sequence, read N- to C-terminus: Bifunctional protein PyrR (179 aa).

Residues Val-100 to Thr-112 carry the PRPP-binding motif.

This sequence belongs to the purine/pyrimidine phosphoribosyltransferase family. PyrR subfamily.

The catalysed reaction is UMP + diphosphate = 5-phospho-alpha-D-ribose 1-diphosphate + uracil. Functionally, regulates the transcription of the pyrimidine nucleotide (pyr) operon in response to exogenous pyrimidines. Its function is as follows. Also displays a weak uracil phosphoribosyltransferase activity which is not physiologically significant. The protein is Bifunctional protein PyrR of Haemophilus influenzae (strain 86-028NP).